The chain runs to 292 residues: UTP--glucose-1-phosphate uridylyltransferase (292 aa).

It belongs to the UDPGP type 2 family.

The catalysed reaction is alpha-D-glucose 1-phosphate + UTP + H(+) = UDP-alpha-D-glucose + diphosphate. In terms of biological role, may play a role in stationary phase survival. This chain is UTP--glucose-1-phosphate uridylyltransferase (galU), found in Mycoplasma genitalium (strain ATCC 33530 / DSM 19775 / NCTC 10195 / G37) (Mycoplasmoides genitalium).